A 120-amino-acid polypeptide reads, in one-letter code: NAD(P)H-quinone oxidoreductase subunit 3, chloroplastic (120 aa).

The next 3 membrane-spanning stretches (helical) occupy residues 9–29 (IFWA…LFSG), 64–84 (MFAL…PWAM), and 88–108 (ILGV…IVGL).

This sequence belongs to the complex I subunit 3 family. In terms of assembly, NDH is composed of at least 16 different subunits, 5 of which are encoded in the nucleus.

It localises to the plastid. The protein localises to the chloroplast thylakoid membrane. It carries out the reaction a plastoquinone + NADH + (n+1) H(+)(in) = a plastoquinol + NAD(+) + n H(+)(out). The enzyme catalyses a plastoquinone + NADPH + (n+1) H(+)(in) = a plastoquinol + NADP(+) + n H(+)(out). NDH shuttles electrons from NAD(P)H:plastoquinone, via FMN and iron-sulfur (Fe-S) centers, to quinones in the photosynthetic chain and possibly in a chloroplast respiratory chain. The immediate electron acceptor for the enzyme in this species is believed to be plastoquinone. Couples the redox reaction to proton translocation, and thus conserves the redox energy in a proton gradient. The protein is NAD(P)H-quinone oxidoreductase subunit 3, chloroplastic of Spinacia oleracea (Spinach).